The chain runs to 537 residues: Cytochrome P450 monooxygenase alt2 (537 aa).

A helical transmembrane segment spans residues H4–I24. C474 provides a ligand contact to heme.

It belongs to the cytochrome P450 family. Heme is required as a cofactor.

The protein resides in the membrane. Its pathway is secondary metabolite biosynthesis. Functionally, cytochrome P450 monooxygenase; part of the gene cluster that mediates the biosynthesis of alternapyrone derivatives. Alternapyrone is a decaketide with octa-methylation from methionine on every C2 unit except the third unit. All the domains in the polyketide synthase alt5 are apparently involved in alternapyrone synthesis, that is, the 8 CMeT, 7 KR, 7 DH, and 4 ER reactions in the 9 KS-mediated condensation steps required for alternapyrone synthesis. the alternapyrone produced by alt5 might be intensively modified by cytochrome P450 monooxygenases alt1, alt2 and alt3 and FAD-dependent oxidoreductase alt4 present in the alt gene cluster. The sequence is that of Cytochrome P450 monooxygenase alt2 from Alternaria solani.